The sequence spans 388 residues: MIFEIIVRDKKTRARLGKLKTFHGEINTPVFMPVGTQGAVKTLSPEEVEKVGAEIILSNTYHLFLRPGHEIVRKGGGLHKFMGWEKPILTDSGGYQVFSLARLRRIDEDGIYFNSHIDGTRYFYTPELVMEIQKSLGSDIIMPLDICLGYGASYWETKEALEITLRWLKRSIDYKNNSNMDHQLLFGIVQGGFYKELRKEAVERMLNIDLPGLALGGISVGEPKDKMYEIIDYTVSLLPEEKPRYLMGVGAPEDLVVGVSMGIDMFDCVLPTRLARHGVFYTSKGRKNIKNAQYKEDFSPLEEDCDCYTCRKFTKAYIRHLFLQHETFSYRLLTIHNLRFLFRLMENIRKSIREGRLEEFKKEFLTEYLRDDRENRLEKEELWSKLLI.

Catalysis depends on Asp-91, which acts as the Proton acceptor. Substrate-binding positions include 91-95, Asp-145, Gln-190, and Gly-217; that span reads DSGGY. Positions 248–254 are RNA binding; it reads GVGAPED. Residue Asp-267 is the Nucleophile of the active site. The RNA binding; important for wobble base 34 recognition stretch occupies residues 272–276; it reads TRLAR. Cys-305, Cys-307, Cys-310, and His-336 together coordinate Zn(2+).

The protein belongs to the queuine tRNA-ribosyltransferase family. As to quaternary structure, homodimer. Within each dimer, one monomer is responsible for RNA recognition and catalysis, while the other monomer binds to the replacement base PreQ1. The cofactor is Zn(2+).

The catalysed reaction is 7-aminomethyl-7-carbaguanine + guanosine(34) in tRNA = 7-aminomethyl-7-carbaguanosine(34) in tRNA + guanine. It functions in the pathway tRNA modification; tRNA-queuosine biosynthesis. Catalyzes the base-exchange of a guanine (G) residue with the queuine precursor 7-aminomethyl-7-deazaguanine (PreQ1) at position 34 (anticodon wobble position) in tRNAs with GU(N) anticodons (tRNA-Asp, -Asn, -His and -Tyr). Catalysis occurs through a double-displacement mechanism. The nucleophile active site attacks the C1' of nucleotide 34 to detach the guanine base from the RNA, forming a covalent enzyme-RNA intermediate. The proton acceptor active site deprotonates the incoming PreQ1, allowing a nucleophilic attack on the C1' of the ribose to form the product. After dissociation, two additional enzymatic reactions on the tRNA convert PreQ1 to queuine (Q), resulting in the hypermodified nucleoside queuosine (7-(((4,5-cis-dihydroxy-2-cyclopenten-1-yl)amino)methyl)-7-deazaguanosine). This chain is Queuine tRNA-ribosyltransferase, found in Dictyoglomus turgidum (strain DSM 6724 / Z-1310).